A 145-amino-acid chain; its full sequence is D-aminoacyl-tRNA deacylase (145 aa).

The Gly-cisPro motif, important for rejection of L-amino acids signature appears at 137-138; the sequence is GP.

It belongs to the DTD family. As to quaternary structure, homodimer.

It localises to the cytoplasm. It catalyses the reaction glycyl-tRNA(Ala) + H2O = tRNA(Ala) + glycine + H(+). The catalysed reaction is a D-aminoacyl-tRNA + H2O = a tRNA + a D-alpha-amino acid + H(+). In terms of biological role, an aminoacyl-tRNA editing enzyme that deacylates mischarged D-aminoacyl-tRNAs. Also deacylates mischarged glycyl-tRNA(Ala), protecting cells against glycine mischarging by AlaRS. Acts via tRNA-based rather than protein-based catalysis; rejects L-amino acids rather than detecting D-amino acids in the active site. By recycling D-aminoacyl-tRNA to D-amino acids and free tRNA molecules, this enzyme counteracts the toxicity associated with the formation of D-aminoacyl-tRNA entities in vivo and helps enforce protein L-homochirality. The chain is D-aminoacyl-tRNA deacylase from Escherichia coli O81 (strain ED1a).